Reading from the N-terminus, the 328-residue chain is Ferredoxin--NADP reductase 2 (328 aa).

Glutamate 37, glutamine 45, tyrosine 50, valine 90, phenylalanine 124, aspartate 285, and threonine 325 together coordinate FAD.

Belongs to the ferredoxin--NADP reductase type 2 family. Homodimer. FAD is required as a cofactor.

The enzyme catalyses 2 reduced [2Fe-2S]-[ferredoxin] + NADP(+) + H(+) = 2 oxidized [2Fe-2S]-[ferredoxin] + NADPH. In Latilactobacillus sakei subsp. sakei (strain 23K) (Lactobacillus sakei subsp. sakei), this protein is Ferredoxin--NADP reductase 2.